Reading from the N-terminus, the 398-residue chain is Argininosuccinate synthase (398 aa).

Residue 8–16 (AYSGGLDTS) coordinates ATP. Residue tyrosine 87 coordinates L-citrulline. ATP is bound at residue glycine 117. The L-aspartate site is built by threonine 119, asparagine 123, and aspartate 124. Asparagine 123 is a binding site for L-citrulline. L-citrulline-binding residues include arginine 127, serine 175, glutamate 260, and tyrosine 272.

The protein belongs to the argininosuccinate synthase family. Type 1 subfamily. Homotetramer.

Its subcellular location is the cytoplasm. The catalysed reaction is L-citrulline + L-aspartate + ATP = 2-(N(omega)-L-arginino)succinate + AMP + diphosphate + H(+). Its pathway is amino-acid biosynthesis; L-arginine biosynthesis; L-arginine from L-ornithine and carbamoyl phosphate: step 2/3. The chain is Argininosuccinate synthase from Mycobacterium avium (strain 104).